Here is a 507-residue protein sequence, read N- to C-terminus: MFS transporter fsa7 (507 aa).

The segment at 1–65 (MATKDPAVTT…PDDPEHPLNW (65 aa)) is disordered. Residue Asn-64 is glycosylated (N-linked (GlcNAc...) asparagine). A helical transmembrane segment spans residues 72 to 92 (LHLVIVSLFTLAANLAATMFA). Residue Asn-106 is glycosylated (N-linked (GlcNAc...) asparagine). A run of 5 helical transmembrane segments spans residues 111 to 131 (AMTV…LAPL), 146 to 166 (FVYI…MFLV), 169 to 189 (IICG…VADL), 200 to 220 (ALFT…GGFV), and 228 to 248 (WTFR…VIFM). A glycan (N-linked (GlcNAc...) asparagine) is linked at Asn-252. A run of 6 helical transmembrane segments spans residues 302-322 (PIVL…FLLF), 341-361 (GLAY…FSVL), 379-399 (LILM…YGWT), 406-426 (WIVP…VVIP), 429-449 (IYLV…ANLL), and 472-492 (GWGN…PWFF).

It belongs to the major facilitator superfamily.

The protein localises to the cell membrane. In terms of biological role, efflux pump that might be required for efficient secretion of fusarisetin A or other secondary metabolies produced by the fusarisetin A gene cluster. This Fusarium sp. (strain FN080326) protein is MFS transporter fsa7.